We begin with the raw amino-acid sequence, 644 residues long: uncharacterized protein (644 aa).

A disordered region spans residues 1–39; it reads MKANGLDNDPARTRMERTDIDSEHPEAQPLLNNNHRTLG. Residues 1 to 90 are Cytoplasmic-facing; the sequence is MKANGLDNDP…ILNILILINT (90 aa). The span at 9–26 shows a compositional bias: basic and acidic residues; that stretch reads DPARTRMERTDIDSEHPE. Phosphoserine is present on residues Ser-22, Ser-56, and Ser-63. A helical membrane pass occupies residues 91 to 111; it reads IWLVTTLISDFFFNINILFGF. The Vacuolar portion of the chain corresponds to 112–122; sequence SNRYASFNDLT. The chain crosses the membrane as a helical span at residues 123–143; sequence LIFISIIANSFNLWFNKLGLY. Residues 144-147 lie on the Cytoplasmic side of the membrane; sequence SALD. A helical transmembrane segment spans residues 148–168; it reads YSLNVTLCVLTLFNLALTYLI. The Vacuolar portion of the chain corresponds to 169–174; that stretch reads KYTRQR. Residues 175 to 195 form a helical membrane-spanning segment; that stretch reads IGFVGTFTYLWTSFSFFIGAI. Residues 196–271 are Cytoplasmic-facing; that stretch reads LDWYLLFYNN…EWVSIGFRNT (76 aa). A disordered region spans residues 225–251; the sequence is NENHTNSTENRDRSQYGSGSPTPTHRS. The segment covering 239-251 has biased composition (polar residues); it reads QYGSGSPTPTHRS. Ser-244 carries the phosphoserine modification. The chain crosses the membrane as a helical span at residues 272 to 292; it reads IKFLILIFFALFTLNTLLTTL. The Vacuolar segment spans residues 293–644; the sequence is DTYRLTHKLP…IGELGKLTED (352 aa). The region spanning 348 to 619 is the AB hydrolase-1 domain; the sequence is PIILFEHGGY…IVEGGHEIYK (272 aa). A disordered region spans residues 469 to 492; that stretch reads GRGDGDDGDDGNGNDGDGRNHDKT.

The protein localises to the vacuole membrane. This is an uncharacterized protein from Saccharomyces cerevisiae (strain YJM789) (Baker's yeast).